A 215-amino-acid polypeptide reads, in one-letter code: Probable nicotinate-nucleotide adenylyltransferase (215 aa).

Belongs to the NadD family.

The enzyme catalyses nicotinate beta-D-ribonucleotide + ATP + H(+) = deamido-NAD(+) + diphosphate. The protein operates within cofactor biosynthesis; NAD(+) biosynthesis; deamido-NAD(+) from nicotinate D-ribonucleotide: step 1/1. Catalyzes the reversible adenylation of nicotinate mononucleotide (NaMN) to nicotinic acid adenine dinucleotide (NaAD). This chain is Probable nicotinate-nucleotide adenylyltransferase, found in Coxiella burnetii (strain RSA 331 / Henzerling II).